We begin with the raw amino-acid sequence, 160 residues long: Major pollen allergen Bet v 1-C (160 aa).

Brassinolide is bound by residues K55, Y82, Y84, and N101.

It belongs to the BetVI family.

The protein resides in the cytoplasm. May be a general steroid carrier protein. This chain is Major pollen allergen Bet v 1-C (BETV1C), found in Betula pendula (European white birch).